We begin with the raw amino-acid sequence, 551 residues long: Putative hydroxymethylpyrimidine/phosphomethylpyrimidine kinase 2 (551 aa).

A 4-amino-5-hydroxymethyl-2-methylpyrimidine-binding site is contributed by E76.

In the N-terminal section; belongs to the ThiD family. The protein in the C-terminal section; belongs to the thiaminase-2 family.

Its subcellular location is the cytoplasm. It carries out the reaction 4-amino-5-hydroxymethyl-2-methylpyrimidine + ATP = 4-amino-2-methyl-5-(phosphooxymethyl)pyrimidine + ADP + H(+). The catalysed reaction is 4-amino-2-methyl-5-(phosphooxymethyl)pyrimidine + ATP = 4-amino-2-methyl-5-(diphosphooxymethyl)pyrimidine + ADP. Its pathway is cofactor biosynthesis; thiamine diphosphate biosynthesis; 4-amino-2-methyl-5-diphosphomethylpyrimidine from 5-amino-1-(5-phospho-D-ribosyl)imidazole: step 2/3. The protein operates within cofactor biosynthesis; thiamine diphosphate biosynthesis; 4-amino-2-methyl-5-diphosphomethylpyrimidine from 5-amino-1-(5-phospho-D-ribosyl)imidazole: step 3/3. In terms of biological role, catalyzes the phosphorylation of hydroxymethylpyrimidine phosphate (HMP-P) to HMP-PP, and of HMP to HMP-P. This is Putative hydroxymethylpyrimidine/phosphomethylpyrimidine kinase 2 from Schizosaccharomyces pombe (strain 972 / ATCC 24843) (Fission yeast).